The primary structure comprises 118 residues: Putative pterin-4-alpha-carbinolamine dehydratase (118 aa).

This sequence belongs to the pterin-4-alpha-carbinolamine dehydratase family.

The catalysed reaction is (4aS,6R)-4a-hydroxy-L-erythro-5,6,7,8-tetrahydrobiopterin = (6R)-L-erythro-6,7-dihydrobiopterin + H2O. The chain is Putative pterin-4-alpha-carbinolamine dehydratase from Pseudomonas paraeruginosa (strain DSM 24068 / PA7) (Pseudomonas aeruginosa (strain PA7)).